A 536-amino-acid polypeptide reads, in one-letter code: Phosphoenolpyruvate carboxykinase (ATP) (536 aa).

The substrate site is built by Arg61, Tyr195, and Lys201. Residues Lys201, His220, and 236-244 (GLSGTGKTT) each bind ATP. Mn(2+) contacts are provided by Lys201 and His220. Asp257 contributes to the Mn(2+) binding site. ATP contacts are provided by Glu285, Arg322, and Thr447. Substrate is bound at residue Arg322.

The protein belongs to the phosphoenolpyruvate carboxykinase (ATP) family. Mn(2+) serves as cofactor.

The protein localises to the cytoplasm. The catalysed reaction is oxaloacetate + ATP = phosphoenolpyruvate + ADP + CO2. It participates in carbohydrate biosynthesis; gluconeogenesis. Its function is as follows. Involved in the gluconeogenesis. Catalyzes the conversion of oxaloacetate (OAA) to phosphoenolpyruvate (PEP) through direct phosphoryl transfer between the nucleoside triphosphate and OAA. The protein is Phosphoenolpyruvate carboxykinase (ATP) of Chelativorans sp. (strain BNC1).